Consider the following 822-residue polypeptide: Penicillin-binding protein 1A (822 aa).

Topologically, residues 1–5 are cytoplasmic; sequence MRLLK. A helical; Signal-anchor for type II membrane protein membrane pass occupies residues 6-26; the sequence is FLWWTCVTLICGVLLSFSGAY. Residues 27 to 822 are Periplasmic-facing; sequence LYLSPSLPSV…DDEGAPIDLF (796 aa). Residues 48–216 are transglycosylase; sequence LKVYSEDGKL…SRYNPLVNPT (169 aa). Glu86 functions as the Proton donor; for transglycosylase activity in the catalytic mechanism. The segment at 403–744 is transpeptidase; that stretch reads IRVQRQEDGT…GTVALPIWIR (342 aa). Catalysis depends on Ser461, which acts as the Acyl-ester intermediate; for transpeptidase activity. Disordered regions lie at residues 614–654 and 790–822; these read AADA…FEPT and KNEDTPPSVNELPPGSFPGSPLPDDEGAPIDLF. Positions 812–822 are enriched in acidic residues; that stretch reads PDDEGAPIDLF.

The protein in the N-terminal section; belongs to the glycosyltransferase 51 family. In the C-terminal section; belongs to the transpeptidase family.

It is found in the cell inner membrane. It carries out the reaction [GlcNAc-(1-&gt;4)-Mur2Ac(oyl-L-Ala-gamma-D-Glu-L-Lys-D-Ala-D-Ala)](n)-di-trans,octa-cis-undecaprenyl diphosphate + beta-D-GlcNAc-(1-&gt;4)-Mur2Ac(oyl-L-Ala-gamma-D-Glu-L-Lys-D-Ala-D-Ala)-di-trans,octa-cis-undecaprenyl diphosphate = [GlcNAc-(1-&gt;4)-Mur2Ac(oyl-L-Ala-gamma-D-Glu-L-Lys-D-Ala-D-Ala)](n+1)-di-trans,octa-cis-undecaprenyl diphosphate + di-trans,octa-cis-undecaprenyl diphosphate + H(+). The catalysed reaction is Preferential cleavage: (Ac)2-L-Lys-D-Ala-|-D-Ala. Also transpeptidation of peptidyl-alanyl moieties that are N-acyl substituents of D-alanine.. Its pathway is cell wall biogenesis; peptidoglycan biosynthesis. Its function is as follows. Cell wall formation. Synthesis of cross-linked peptidoglycan from the lipid intermediates. The enzyme has a penicillin-insensitive transglycosylase N-terminal domain (formation of linear glycan strands) and a penicillin-sensitive transpeptidase C-terminal domain (cross-linking of the peptide subunits). This chain is Penicillin-binding protein 1A (mrcA), found in Pseudomonas aeruginosa (strain ATCC 15692 / DSM 22644 / CIP 104116 / JCM 14847 / LMG 12228 / 1C / PRS 101 / PAO1).